A 265-amino-acid polypeptide reads, in one-letter code: Undecaprenyl-diphosphatase (265 aa).

7 helical membrane passes run 41–61, 75–95, 104–124, 137–157, 180–200, 215–235, and 244–264; these read IAYT…LIYF, LKFL…LYVI, YNPS…GIYI, LSTK…LPGV, YSYL…LLFT, GIAL…GFLL, and YLID…GLII.

It belongs to the UppP family.

Its subcellular location is the cell membrane. It catalyses the reaction di-trans,octa-cis-undecaprenyl diphosphate + H2O = di-trans,octa-cis-undecaprenyl phosphate + phosphate + H(+). Functionally, catalyzes the dephosphorylation of undecaprenyl diphosphate (UPP). The chain is Undecaprenyl-diphosphatase from Saccharolobus islandicus (strain Y.G.57.14 / Yellowstone #1) (Sulfolobus islandicus).